Consider the following 92-residue polypeptide: Large ribosomal subunit protein eL43A (92 aa).

The C4-type zinc-finger motif lies at 39-60 (CSFCGKKTVKRGAAGIWTCSCC). Serine 40 carries the phosphoserine modification.

It belongs to the eukaryotic ribosomal protein eL43 family. As to quaternary structure, component of the large ribosomal subunit (LSU). Mature yeast ribosomes consist of a small (40S) and a large (60S) subunit. The 40S small subunit contains 1 molecule of ribosomal RNA (18S rRNA) and 33 different proteins (encoded by 57 genes). The large 60S subunit contains 3 rRNA molecules (25S, 5.8S and 5S rRNA) and 46 different proteins (encoded by 81 genes).

The protein resides in the cytoplasm. Component of the ribosome, a large ribonucleoprotein complex responsible for the synthesis of proteins in the cell. The small ribosomal subunit (SSU) binds messenger RNAs (mRNAs) and translates the encoded message by selecting cognate aminoacyl-transfer RNA (tRNA) molecules. The large subunit (LSU) contains the ribosomal catalytic site termed the peptidyl transferase center (PTC), which catalyzes the formation of peptide bonds, thereby polymerizing the amino acids delivered by tRNAs into a polypeptide chain. The nascent polypeptides leave the ribosome through a tunnel in the LSU and interact with protein factors that function in enzymatic processing, targeting, and the membrane insertion of nascent chains at the exit of the ribosomal tunnel. This Saccharomyces cerevisiae (strain ATCC 204508 / S288c) (Baker's yeast) protein is Large ribosomal subunit protein eL43A.